Reading from the N-terminus, the 740-residue chain is Ion-translocating oxidoreductase complex subunit C (740 aa).

4Fe-4S ferredoxin-type domains follow at residues 369–397 (GEPQ…QQLY) and 407–436 (KATT…VQYF). [4Fe-4S] cluster-binding residues include Cys377, Cys380, Cys383, Cys387, Cys416, Cys419, Cys422, and Cys426. The tract at residues 602 to 717 (KLEQQQANAE…PEEQVDPRKA (116 aa)) is disordered. Low complexity-rich tracts occupy residues 605–615 (QQQANAEPEQQ) and 637–647 (QQQANAEPEQQ).

The protein belongs to the 4Fe4S bacterial-type ferredoxin family. RnfC subfamily. As to quaternary structure, the complex is composed of six subunits: RsxA, RsxB, RsxC, RsxD, RsxE and RsxG. Requires [4Fe-4S] cluster as cofactor.

It is found in the cell inner membrane. Functionally, part of a membrane-bound complex that couples electron transfer with translocation of ions across the membrane. Required to maintain the reduced state of SoxR. This is Ion-translocating oxidoreductase complex subunit C from Escherichia coli (strain ATCC 8739 / DSM 1576 / NBRC 3972 / NCIMB 8545 / WDCM 00012 / Crooks).